The following is a 334-amino-acid chain: MKCTIPEQQKVILIDEIGGYDVIKYEDYPVPSISEEELLIKNKYTGVNYIESYFRKGIYPCEKPYVLGREASGTVVAKGKGVTNFEVGDQVAYISNSTFAQYSKISSQGPVMKLPKGTSDEELKLYAAGLLQVLTALSFTNEAYHVKKGDYVLLFAAAGGVGLILNQLLKMKGAHTIAVASTDEKLKIAKEYGAEYLINASKEDILRQVLKFTNGKGVDASFDSVGKDTFEISLAALKRKGVFVSFGNASGLIPPFSITRLSPKNITLVRPQLYGYIADPEEWKYYSDEFFGLVNSKKLNIKIYKTYPLRDYRTAAADIESRKTVGKLVLEIPQ.

It belongs to the zinc-containing alcohol dehydrogenase family. Quinone oxidoreductase subfamily.

The catalysed reaction is 2 a quinone + NADPH + H(+) = 2 a 1,4-benzosemiquinone + NADP(+). The sequence is that of Probable quinone oxidoreductase (ZTA1) from Saccharomyces cerevisiae (strain ATCC 204508 / S288c) (Baker's yeast).